A 240-amino-acid chain; its full sequence is Phosphatidylserine decarboxylase proenzyme (240 aa).

Ser-209 serves as the catalytic Schiff-base intermediate with substrate; via pyruvic acid. Ser-209 carries the post-translational modification Pyruvic acid (Ser); by autocatalysis.

The protein belongs to the phosphatidylserine decarboxylase family. PSD-A subfamily. In terms of assembly, heterodimer of a large membrane-associated beta subunit and a small pyruvoyl-containing alpha subunit. Pyruvate is required as a cofactor. Post-translationally, is synthesized initially as an inactive proenzyme. Formation of the active enzyme involves a self-maturation process in which the active site pyruvoyl group is generated from an internal serine residue via an autocatalytic post-translational modification. Two non-identical subunits are generated from the proenzyme in this reaction, and the pyruvate is formed at the N-terminus of the alpha chain, which is derived from the carboxyl end of the proenzyme. The post-translation cleavage follows an unusual pathway, termed non-hydrolytic serinolysis, in which the side chain hydroxyl group of the serine supplies its oxygen atom to form the C-terminus of the beta chain, while the remainder of the serine residue undergoes an oxidative deamination to produce ammonia and the pyruvoyl prosthetic group on the alpha chain.

Its subcellular location is the cell membrane. The enzyme catalyses a 1,2-diacyl-sn-glycero-3-phospho-L-serine + H(+) = a 1,2-diacyl-sn-glycero-3-phosphoethanolamine + CO2. The protein operates within phospholipid metabolism; phosphatidylethanolamine biosynthesis; phosphatidylethanolamine from CDP-diacylglycerol: step 2/2. Catalyzes the formation of phosphatidylethanolamine (PtdEtn) from phosphatidylserine (PtdSer). The sequence is that of Phosphatidylserine decarboxylase proenzyme from Mycobacterium marinum (strain ATCC BAA-535 / M).